We begin with the raw amino-acid sequence, 115 residues long: Nucleoid-associated protein Rpic_1036 (115 aa).

Belongs to the YbaB/EbfC family. Homodimer.

The protein resides in the cytoplasm. It localises to the nucleoid. Its function is as follows. Binds to DNA and alters its conformation. May be involved in regulation of gene expression, nucleoid organization and DNA protection. This chain is Nucleoid-associated protein Rpic_1036, found in Ralstonia pickettii (strain 12J).